The sequence spans 447 residues: Gustatory receptor family protein 3 (447 aa).

At 1–69 (MTITASNTLE…HTHSSARNTM (69 aa)) the chain is on the extracellular side. The helical transmembrane segment at 70 to 90 (FKWPLTIYNYLTLAILTAATI) threads the bilayer. Over 91–116 (RRISQIKQKSATNEEKDAAFHVLNPT) the chain is Cytoplasmic. A helical transmembrane segment spans residues 117 to 137 (FVLTLCHALLMFSGLAAGFLL). Residues 138–171 (LKLQKQREKMYHVLDQGLGRNRNEEHDSHHFKLN) lie on the Extracellular side of the membrane. Residues 172–192 (KLFISISFSFAAALSFVQIAT) form a helical membrane-spanning segment. Residues 193 to 211 (KMRYLDLPDTPDLINRKIY) lie on the Cytoplasmic side of the membrane. A helical transmembrane segment spans residues 212–232 (FVILEGYVIFIASSCISLVAI). Over 233 to 292 (LFFQLCRILQFSIGQLIEEMVPKEKEECPLPEQSLQQIHDVQIHYQEISNAKLYIEQNFS) the chain is Extracellular. Residues 293 to 313 (FSLFYTYGCCIPLTCLLGYIA) form a helical membrane-spanning segment. At 314–328 (FRNGIQADMAETFSV) the chain is on the cytoplasmic side. A helical membrane pass occupies residues 329 to 349 (AIWLTNTMLALMLFSIPAFMI). The Extracellular segment spans residues 350 to 405 (AEEGDKLLTASFKMYHETLCEERDLLVLSQMSFLSFQMHATKLTLTAGNFFMMNRK). The chain crosses the membrane as a helical span at residues 406–426 (IMISLFSAIFTYFLILVQFDA). Over 427 to 447 (EKERAGECNNQSRVLIVQPPV) the chain is Cytoplasmic.

This sequence belongs to the insect chemoreceptor superfamily. Gustatory receptor (GR) family. In terms of tissue distribution, expressed in I2 pharyngeal neurons.

Its subcellular location is the membrane. Functionally, chemoreceptor involved in light-induced avoidance behavior. Probably acts as a molecular sensor in I2 pharyngeal neurons, required for the inhibition of feeding in response to light and hydrogen peroxide. Involved in circadian rhythms, probably by acting as a light sensor. In contrast to lite-1, does not act as a photoreceptor. This chain is Gustatory receptor family protein 3, found in Caenorhabditis elegans.